The chain runs to 305 residues: UDP-N-acetylenolpyruvoylglucosamine reductase (305 aa).

The FAD-binding PCMH-type domain occupies 22–190 (KVGGAADFFA…LSARFRLQAG (169 aa)). Arginine 169 is a catalytic residue. The Proton donor role is filled by serine 220. The active site involves glutamate 290.

Belongs to the MurB family. Requires FAD as cofactor.

Its subcellular location is the cytoplasm. It carries out the reaction UDP-N-acetyl-alpha-D-muramate + NADP(+) = UDP-N-acetyl-3-O-(1-carboxyvinyl)-alpha-D-glucosamine + NADPH + H(+). It functions in the pathway cell wall biogenesis; peptidoglycan biosynthesis. In terms of biological role, cell wall formation. In Synechococcus sp. (strain RCC307), this protein is UDP-N-acetylenolpyruvoylglucosamine reductase.